Consider the following 418-residue polypeptide: 26S proteasome regulatory subunit 6B (418 aa).

The residue at position 1 (methionine 1) is an N-acetylmethionine. At serine 21 the chain carries Phosphoserine. Position 25 is a phosphothreonine (threonine 25). Serine 28 is subject to Phosphoserine. Residue 206 to 213 (GPPGCGKT) coordinates ATP. N6-acetyllysine is present on residues lysine 397 and lysine 401.

This sequence belongs to the AAA ATPase family. Component of the 19S proteasome regulatory particle complex. The 26S proteasome consists of a 20S core particle (CP) and two 19S regulatory subunits (RP). The regulatory particle is made of a lid composed of 9 subunits, a base containing 6 ATPases including PSMC4 and few additional components. Interacts with NR1I3. Interacts with PAAF1. Interacts with TRIM5. Interacts with ZFAND1.

The protein resides in the cytoplasm. Its subcellular location is the nucleus. In terms of biological role, component of the 26S proteasome, a multiprotein complex involved in the ATP-dependent degradation of ubiquitinated proteins. This complex plays a key role in the maintenance of protein homeostasis by removing misfolded or damaged proteins, which could impair cellular functions, and by removing proteins whose functions are no longer required. Therefore, the proteasome participates in numerous cellular processes, including cell cycle progression, apoptosis, or DNA damage repair. PSMC4 belongs to the heterohexameric ring of AAA (ATPases associated with diverse cellular activities) proteins that unfolds ubiquitinated target proteins that are concurrently translocated into a proteolytic chamber and degraded into peptides. The protein is 26S proteasome regulatory subunit 6B (Psmc4) of Mus musculus (Mouse).